A 373-amino-acid polypeptide reads, in one-letter code: Indole glucosinolate O-methyltransferase 1 (373 aa).

Residues Gly-217, Asp-240, Asp-260, Met-261, and Lys-274 each contribute to the S-adenosyl-L-homocysteine site. The active-site Proton acceptor is the His-278.

This sequence belongs to the class I-like SAM-binding methyltransferase superfamily. Cation-independent O-methyltransferase family. As to quaternary structure, interacts with B'GAMMA.

It functions in the pathway secondary metabolite biosynthesis. In terms of biological role, involved in indole glucosinolate biosynthesis. Catalyzes methoxylation reactions of the glucosinolate indole ring. Converts the hydroxy intermediates 4-hydroxy-indol-3-yl-methylglucosinolate (4OH-I3M) and 1-hydroxy-indol-3-yl-methylglucosinolate (1OH-I3M) to 4-methoxy-indol-3-yl-methylglucosinolate (4MO-I3M) and 1-methoxy-indol-3-yl-methylglucosinolate (1MO-I3M), respectively. This chain is Indole glucosinolate O-methyltransferase 1, found in Arabidopsis thaliana (Mouse-ear cress).